The chain runs to 372 residues: Putative actin-27 (372 aa).

Belongs to the actin family.

It is found in the cytoplasm. Its subcellular location is the cytoskeleton. It carries out the reaction ATP + H2O = ADP + phosphate + H(+). Functionally, actins are highly conserved proteins that are involved in various types of cell motility and are ubiquitously expressed in all eukaryotic cells. Multiple isoforms are involved in various cellular functions such as cytoskeleton structure, cell mobility, chromosome movement and muscle contraction. This is Putative actin-27 (act27) from Dictyostelium discoideum (Social amoeba).